Consider the following 272-residue polypeptide: Orotidine 5'-phosphate decarboxylase (272 aa).

Lysine 96 functions as the Proton donor in the catalytic mechanism.

It belongs to the OMP decarboxylase family. Type 2 subfamily.

It carries out the reaction orotidine 5'-phosphate + H(+) = UMP + CO2. The protein operates within pyrimidine metabolism; UMP biosynthesis via de novo pathway; UMP from orotate: step 2/2. The protein is Orotidine 5'-phosphate decarboxylase of Phocaeicola vulgatus (strain ATCC 8482 / DSM 1447 / JCM 5826 / CCUG 4940 / NBRC 14291 / NCTC 11154) (Bacteroides vulgatus).